Reading from the N-terminus, the 226-residue chain is MKKINIAIDGPAGAGKSTISKLLASQLGYIHIDTGAMYRAVGLKVLKNNISPHDRKKIVEILNSTDIQIKLVDGRQLVFLDGEDVTEKIRQPEVSMYASDVSKIREVRERLVKMQQELAKQKGVIMDGRDIGTHVLPNAELKIFLTATAEERAKRRFLELKQKGYDVDYYQLLDEIKKRDQNDMTREFAPLRVAEDAIVIDSTSLSIEEVLQKVLELFYKVVKNEV.

10-18 (GPAGAGKST) is a binding site for ATP.

It belongs to the cytidylate kinase family. Type 1 subfamily.

It localises to the cytoplasm. The catalysed reaction is CMP + ATP = CDP + ADP. It carries out the reaction dCMP + ATP = dCDP + ADP. The chain is Cytidylate kinase from Caldicellulosiruptor bescii (strain ATCC BAA-1888 / DSM 6725 / KCTC 15123 / Z-1320) (Anaerocellum thermophilum).